The primary structure comprises 79 residues: MAEAGARRPFFRRRKTCPFTGTNAPKIDYKDSKLLMRYVSERGKIVPSRITAVSAKKQRELARAIKRARFLGLLPYVIR.

This sequence belongs to the bacterial ribosomal protein bS18 family. In terms of assembly, part of the 30S ribosomal subunit. Forms a tight heterodimer with protein bS6.

Binds as a heterodimer with protein bS6 to the central domain of the 16S rRNA, where it helps stabilize the platform of the 30S subunit. This chain is Small ribosomal subunit protein bS18, found in Rhodopseudomonas palustris (strain BisB5).